Consider the following 584-residue polypeptide: uncharacterized protein (584 aa).

PbH1 repeat units lie at residues 100-128 (QENI…RSTH), 139-161 (CSNV…IVSP), 173-195 (SEQI…SITG), 196-225 (CDMV…DIEG), 236-266 (PINV…LIEG), 313-333 (TSDA…IDVR), 334-356 (GKSV…LVYQ), 357-382 (SSDV…GLRA), 406-427 (GGNM…WIAQ), 456-478 (NAGA…YCST), and 529-554 (SAGS…QTNT).

This is an uncharacterized protein from Bacillus subtilis (strain 168).